The chain runs to 843 residues: Respiratory burst oxidase homolog protein B (843 aa).

Positions 1 to 10 are enriched in acidic residues; sequence MREEEMESSS. Residues 1–27 are disordered; that stretch reads MREEEMESSSEGETNKISRCKATGSDN. Topologically, residues 1–297 are cytoplasmic; it reads MREEEMESSS…SYFFLENWKR (297 aa). 2 EF-hand-like regions span residues 114-122 and 148-159; these read AVEGKLPKS and RGTTSSSITKTE. EF-hand domains are found at residues 171 to 206 and 215 to 250; these read SFDDRLQIFFDMVDKNLDGRITGDEVKEIIALSASA and NVDEYAALIMEELDRDNLGYIELHNLETLLLQVPSQ. The Ca(2+) site is built by aspartate 184, asparagine 186, aspartate 188, arginine 190, and glutamate 195. Serine 268 carries the phosphoserine modification. A helical membrane pass occupies residues 298–318; sequence IWVLTLWISICITLFTWKFLQ. Topologically, residues 319 to 383 are extracellular; sequence YKRKTVFEVM…FDDNINFHKV (65 aa). One can recognise a Ferric oxidoreductase domain in the interval 336 to 495; the sequence is KGSAETLKFN…LFVIVYVLLI (160 aa). A helical transmembrane segment spans residues 384–404; sequence VAFGIAVGIGLHAISHLACDF. The Cytoplasmic portion of the chain corresponds to 405–439; the sequence is PRLLHAKNVEFEPMKKFFGDERPENYGWFMKGTDG. The helical transmembrane segment at 440-460 threads the bilayer; sequence WTGVTMVVLMLVAYVLAQSWF. Residues 461–482 are Extracellular-facing; that stretch reads RRNRANLPKSLKRLTGFNAFWY. Residues 483–503 form a helical membrane-spanning segment; it reads SHHLFVIVYVLLIVHGYFVYL. At 504–511 the chain is on the cytoplasmic side; the sequence is SKEWYHKT. Residues 512-529 traverse the membrane as a helical segment; that stretch reads TWMYLAVPVLLYAFERLI. Over 530–659 the chain is Extracellular; that stretch reads RAFRPGAKAV…PYGAPAQDYR (130 aa). The FAD-binding FR-type domain occupies 534–657; sequence PGAKAVKVLK…DGPYGAPAQD (124 aa). The helical transmembrane segment at 660-680 threads the bilayer; the sequence is NYDVLLLVGLGIGATPLISII. The Cytoplasmic portion of the chain corresponds to 681-843; it reads RDVLNNIKNQ…TKFEFHKENF (163 aa).

The protein belongs to the RBOH (TC 5.B.1.3) family. Monomer and homodimer.

It is found in the membrane. In terms of biological role, calcium-dependent NADPH oxidase that generates superoxide. The polypeptide is Respiratory burst oxidase homolog protein B (RBOHB) (Arabidopsis thaliana (Mouse-ear cress)).